The sequence spans 94 residues: Aspartyl/glutamyl-tRNA(Asn/Gln) amidotransferase subunit C (94 aa).

This sequence belongs to the GatC family. In terms of assembly, heterotrimer of A, B and C subunits.

It catalyses the reaction L-glutamyl-tRNA(Gln) + L-glutamine + ATP + H2O = L-glutaminyl-tRNA(Gln) + L-glutamate + ADP + phosphate + H(+). The enzyme catalyses L-aspartyl-tRNA(Asn) + L-glutamine + ATP + H2O = L-asparaginyl-tRNA(Asn) + L-glutamate + ADP + phosphate + 2 H(+). In terms of biological role, allows the formation of correctly charged Asn-tRNA(Asn) or Gln-tRNA(Gln) through the transamidation of misacylated Asp-tRNA(Asn) or Glu-tRNA(Gln) in organisms which lack either or both of asparaginyl-tRNA or glutaminyl-tRNA synthetases. The reaction takes place in the presence of glutamine and ATP through an activated phospho-Asp-tRNA(Asn) or phospho-Glu-tRNA(Gln). The chain is Aspartyl/glutamyl-tRNA(Asn/Gln) amidotransferase subunit C from Hydrogenobaculum sp. (strain Y04AAS1).